The primary structure comprises 127 residues: Apolipoprotein C-IV (127 aa).

Positions 1–27 (MSLLRNRLQDLPALCLCVLVLACIGAC) are cleaved as a signal peptide.

Belongs to the apolipoprotein C4 family.

It localises to the secreted. Functionally, may participate in lipoprotein metabolism. This chain is Apolipoprotein C-IV (APOC4), found in Papio anubis (Olive baboon).